The sequence spans 158 residues: Ribonuclease H (158 aa).

Positions Met-1–Asp-147 constitute an RNase H type-1 domain. Positions 8, 52, 74, and 139 each coordinate Mg(2+).

Belongs to the RNase H family. In terms of assembly, monomer. Mg(2+) serves as cofactor.

Its subcellular location is the cytoplasm. It carries out the reaction Endonucleolytic cleavage to 5'-phosphomonoester.. In terms of biological role, endonuclease that specifically degrades the RNA of RNA-DNA hybrids. This is Ribonuclease H from Lachnoclostridium phytofermentans (strain ATCC 700394 / DSM 18823 / ISDg) (Clostridium phytofermentans).